The following is a 220-amino-acid chain: Ribosome biogenesis protein 15 (220 aa).

A disordered region spans residues 1-82 (MVKSTSKTST…KQANEKKSKD (82 aa)). Over residues 9-30 (STKETVTKQPTEEKPIQEKEEL) the composition is skewed to basic and acidic residues. A compositionally biased stretch (acidic residues) spans 39 to 60 (SDEEDEKDEDEIEGLAASDDEQ). Residues 91–169 (GIIYVSRLPH…HLLQVRVLPK (79 aa)) form the RRM domain.

Component of the pre-66S ribosomal particle. Interacts with NOP7 and RRP1.

The protein localises to the cytoplasm. It is found in the nucleus. It localises to the nucleolus. Involved in the biogenesis of the 60S ribosomal subunit. Required for pre-rRNA processing and cytokinesis. Associates with the precursors of the 25S and 5.8S rRNAs. The polypeptide is Ribosome biogenesis protein 15 (Saccharomyces cerevisiae (strain ATCC 204508 / S288c) (Baker's yeast)).